Here is a 256-residue protein sequence, read N- to C-terminus: Proteasome subunit beta type-5 (256 aa).

A propeptide spans cysteine 1–glycine 55 (removed in mature form). Threonine 56 serves as the catalytic Nucleophile.

Belongs to the peptidase T1B family. In terms of assembly, the 26S proteasome consists of a 20S proteasome core and two 19S regulatory subunits. The 20S proteasome core is a barrel-shaped complex made of 28 subunits that are arranged in four stacked rings. The two outer rings are each formed by seven alpha subunits, and the two inner rings are formed by seven beta subunits. The proteolytic activity is exerted by three beta-subunits PSMB5, PSMB6 and PSMB7. Directly interacts with POMP. Interacts with ABCB1 and TAP1.

The protein resides in the cytoplasm. It is found in the nucleus. It catalyses the reaction Cleavage of peptide bonds with very broad specificity.. In terms of biological role, component of the 20S core proteasome complex involved in the proteolytic degradation of most intracellular proteins. This complex plays numerous essential roles within the cell by associating with different regulatory particles. Associated with two 19S regulatory particles, forms the 26S proteasome and thus participates in the ATP-dependent degradation of ubiquitinated proteins. The 26S proteasome plays a key role in the maintenance of protein homeostasis by removing misfolded or damaged proteins that could impair cellular functions, and by removing proteins whose functions are no longer required. Associated with the PA200 or PA28, the 20S proteasome mediates ubiquitin-independent protein degradation. This type of proteolysis is required in several pathways including spermatogenesis (20S-PA200 complex) or generation of a subset of MHC class I-presented antigenic peptides (20S-PA28 complex). Within the 20S core complex, PSMB5 displays a chymotrypsin-like activity. This is Proteasome subunit beta type-5 (PSMB5) from Gallus gallus (Chicken).